An 854-amino-acid chain; its full sequence is Cell division control protein 24 (854 aa).

The span at 1 to 14 (MAIQTRFASGTSLS) shows a compositional bias: polar residues. The disordered stretch occupies residues 1 to 24 (MAIQTRFASGTSLSDLKPKPSATS). A Calponin-homology (CH) domain is found at 135–246 (PNMEDTLLTF…VVETLMNSSP (112 aa)). Residues 278 to 454 (EYVKIIKEFV…KNIARSINEN (177 aa)) enclose the DH domain. A PH domain is found at 478–668 (RISKFGELLY…WSSCLQQLIH (191 aa)). 2 disordered regions span residues 542–571 (ISAS…SNNI) and 674–745 (QFKA…FESE). The span at 682-707 (STSTTSSTAKSSSMMSPTTTMNTPNH) shows a compositional bias: low complexity. A PB1 domain is found at 761–854 (SILFRISYNN…NEKFLNIRLY (94 aa)).

As to quaternary structure, interacts with AXL2.

Its function is as follows. Promotes the exchange of CDC42-bound GDP by GTP. Controls the polarity of calmodulin, and the calcium regulatory process of bud emergence. CDC24 may be involved in the initial selection and organization of the budding site. The sequence is that of Cell division control protein 24 (CDC24) from Saccharomyces cerevisiae (strain ATCC 204508 / S288c) (Baker's yeast).